The sequence spans 199 residues: Ras-related protein Rab-7b (199 aa).

Residues 15 to 22 (GAIGVGKT), 34 to 40 (YEEYQTT), 63 to 67 (DTGGQ), 124 to 127 (NKID), and 154 to 155 (AK) contribute to the GTP site. Short sequence motifs (switch) lie at residues 28 to 41 (YVHK…QTTL) and 67 to 82 (QERF…KGSD). Position 186 is a phosphoserine (Ser186). Residues Cys198 and Cys199 are each lipidated (S-geranylgeranyl cysteine).

This sequence belongs to the small GTPase superfamily. Rab family. Expressed in heart, placenta, lung, skeletal muscle and peripheral blood leukocyte.

The protein resides in the late endosome. The protein localises to the lysosome. It is found in the golgi apparatus. Its subcellular location is the trans-Golgi network. It localises to the cytoplasmic vesicle. The protein resides in the phagosome. The protein localises to the phagosome membrane. Its function is as follows. Controls vesicular trafficking from endosomes to the trans-Golgi network (TGN). Acts as a negative regulator of TLR9 signaling and can suppress TLR9-triggered TNFA, IL6, and IFNB production in macrophages by promoting TLR9 lysosomal degradation. Also negatively regulates TLR4 signaling in macrophages by promoting lysosomal degradation of TLR4. Promotes megakaryocytic differentiation by increasing NF-kappa-B-dependent IL6 production and subsequently enhancing the association of STAT3 with GATA1. Not involved in the regulation of the EGF- and EGFR degradation pathway. This chain is Ras-related protein Rab-7b (RAB7B), found in Homo sapiens (Human).